A 334-amino-acid polypeptide reads, in one-letter code: DNA-directed RNA polymerase subunit alpha (334 aa).

An alpha N-terminal domain (alpha-NTD) region spans residues 1-232 (MIREKLKVST…DLFIPFLHAE (232 aa)). The tract at residues 267 to 334 (QKEITLKSIF…NILQIENHFV (68 aa)) is alpha C-terminal domain (alpha-CTD).

It belongs to the RNA polymerase alpha chain family. As to quaternary structure, in plastids the minimal PEP RNA polymerase catalytic core is composed of four subunits: alpha, beta, beta', and beta''. When a (nuclear-encoded) sigma factor is associated with the core the holoenzyme is formed, which can initiate transcription.

Its subcellular location is the plastid. The protein localises to the chloroplast. It carries out the reaction RNA(n) + a ribonucleoside 5'-triphosphate = RNA(n+1) + diphosphate. Its function is as follows. DNA-dependent RNA polymerase catalyzes the transcription of DNA into RNA using the four ribonucleoside triphosphates as substrates. The chain is DNA-directed RNA polymerase subunit alpha from Pisum sativum (Garden pea).